The following is a 186-amino-acid chain: Adenylate kinase (186 aa).

Residue 10-15 coordinates ATP; sequence GVGKGT. The segment at 30–59 is NMP; that stretch reads STGDIFRYNIKNKTELGLEAMSYTDKGELV. AMP is bound by residues Thr31, Arg36, 57–59, 85–88, and Gln92; these read ELV and GYPR. Residues 126-136 are LID; that stretch reads KRAAEQGRADD. Arg127 is a binding site for ATP. Residues Arg133 and Arg144 each contribute to the AMP site. An ATP-binding site is contributed by Gly172.

This sequence belongs to the adenylate kinase family. Monomer.

The protein localises to the cytoplasm. It catalyses the reaction AMP + ATP = 2 ADP. The protein operates within purine metabolism; AMP biosynthesis via salvage pathway; AMP from ADP: step 1/1. Catalyzes the reversible transfer of the terminal phosphate group between ATP and AMP. Plays an important role in cellular energy homeostasis and in adenine nucleotide metabolism. The sequence is that of Adenylate kinase from Bifidobacterium longum (strain NCC 2705).